The following is a 451-amino-acid chain: Photosystem II CP43 reaction center protein (451 aa).

Residues 1 to 46 lie on the Cytoplasmic side of the membrane; the sequence is ATNRDQESSGFAWWAGNARLINLSGKLLGAHVAHAGLIVFWAGAMT. Trp-13, Leu-27, and Ala-30 together coordinate chlorophyll a. A helical membrane pass occupies residues 47–71; the sequence is LFELAHFIPEKPMYEQGLILIPHIA. At 72–111 the chain is on the lumenal side; sequence TLGWGVGPGGEVVDTFPFFVVGVVHLISSAVLGFGGVYHA. Residues Val-92 and Gly-106 each contribute to the chlorophyll a site. The chain crosses the membrane as a helical span at residues 112-133; it reads IRGPETLEEYSSFFGYDWKDKN. The Cytoplasmic portion of the chain corresponds to 134-155; sequence KMTTILGFHLIVLGIGALLLVA. Ile-138 contacts chlorophyll a. Residues 156-178 traverse the membrane as a helical segment; the sequence is KAMFFGGLYDTWAPGGGDVRVIT. Residues 179-232 lie on the Lumenal side of the membrane; it reads NPTLDPRVIFGYLLKSPFGGEGWIVSVNNLEDVVGGHIWIGLICIAGGIWHILT. Chlorophyll a contacts are provided by Val-211 and Gly-225. The chain crosses the membrane as a helical span at residues 233–253; sequence TPFGWARRAFIWSGEAYLSYS. Over 254–268 the chain is Cytoplasmic; that stretch reads LGALSMMGFIATCFV. The helical transmembrane segment at 269–290 threads the bilayer; that stretch reads WFNNTVYPSEFYGPTGPEASQA. Residues 291–424 are Lumenal-facing; it reads QAMTFLIRDQ…FLVGHLWHAG (134 aa). Residue Glu-345 participates in [CaMn4O5] cluster binding. Residues Leu-404, Phe-415, and Gly-418 each coordinate chlorophyll a. Residues 425 to 449 traverse the membrane as a helical segment; sequence RARAAAAGFEKGIDRESEPVLSMPS. Over 450–451 the chain is Cytoplasmic; that stretch reads LD.

This sequence belongs to the PsbB/PsbC family. PsbC subfamily. In terms of assembly, PSII is composed of 1 copy each of membrane proteins PsbA, PsbB, PsbC, PsbD, PsbE, PsbF, PsbH, PsbI, PsbJ, PsbK, PsbL, PsbM, PsbT, PsbX, PsbY, PsbZ, Psb30/Ycf12, peripheral proteins PsbO, CyanoQ (PsbQ), PsbU, PsbV and a large number of cofactors. It forms dimeric complexes. Binds multiple chlorophylls and provides some of the ligands for the Ca-4Mn-5O cluster of the oxygen-evolving complex. It may also provide a ligand for a Cl- that is required for oxygen evolution. PSII binds additional chlorophylls, carotenoids and specific lipids. serves as cofactor.

The protein resides in the cellular thylakoid membrane. One of the components of the core complex of photosystem II (PSII). It binds chlorophyll and helps catalyze the primary light-induced photochemical processes of PSII. PSII is a light-driven water:plastoquinone oxidoreductase, using light energy to abstract electrons from H(2)O, generating O(2) and a proton gradient subsequently used for ATP formation. This Thermostichus vulcanus (Synechococcus vulcanus) protein is Photosystem II CP43 reaction center protein.